Reading from the N-terminus, the 454-residue chain is UPF0210 protein Mlab_1030 (454 aa).

It belongs to the UPF0210 family.

The chain is UPF0210 protein Mlab_1030 from Methanocorpusculum labreanum (strain ATCC 43576 / DSM 4855 / Z).